The sequence spans 245 residues: tRNA pseudouridine synthase A (245 aa).

Asp-52 (nucleophile) is an active-site residue. Substrate is bound at residue Tyr-111.

This sequence belongs to the tRNA pseudouridine synthase TruA family. Homodimer.

It catalyses the reaction uridine(38/39/40) in tRNA = pseudouridine(38/39/40) in tRNA. In terms of biological role, formation of pseudouridine at positions 38, 39 and 40 in the anticodon stem and loop of transfer RNAs. The polypeptide is tRNA pseudouridine synthase A (Bradyrhizobium sp. (strain BTAi1 / ATCC BAA-1182)).